The primary structure comprises 257 residues: MLLAIDCGNTNTVFSLWDGTRFVATWRTSTEWQRTADQYYVWLRTLMQFQKLEVEITDVIISSTVPRVVFNLRVFADRYFNTRPLVVGKPDCLLPVDVRVDEGTQVGPDRLVNTVAGFDLFGGDLIMVDFGTATTFDVVDTDGAYVGGVIAPGVNLSLEALHQAAAALPHVDITKPQSVVGTNTVACMQSGVFWGYVGLVREICERIKAERARDMRVISTGGLAPLFQQTEALFDAYQEDLTMHGLTVIYKYNKETE.

Residue 6-13 (DCGNTNTV) participates in ATP binding. 107–110 (GPDR) lines the substrate pocket. Asp109 (proton acceptor) is an active-site residue. Asp129 contributes to the K(+) binding site. Thr132 contacts ATP. Substrate is bound at residue Thr184.

The protein belongs to the type III pantothenate kinase family. In terms of assembly, homodimer. The cofactor is NH4(+). K(+) serves as cofactor.

The protein resides in the cytoplasm. It catalyses the reaction (R)-pantothenate + ATP = (R)-4'-phosphopantothenate + ADP + H(+). It participates in cofactor biosynthesis; coenzyme A biosynthesis; CoA from (R)-pantothenate: step 1/5. Catalyzes the phosphorylation of pantothenate (Pan), the first step in CoA biosynthesis. In Roseobacter denitrificans (strain ATCC 33942 / OCh 114) (Erythrobacter sp. (strain OCh 114)), this protein is Type III pantothenate kinase.